Reading from the N-terminus, the 235-residue chain is MKKLSKRMASLSTKIEDRIYAPLEALSIIKENANAKFDETIEAHIRLGIDPKYTDQQLRTTVALPHGTGQSIRIAVITSGENVSKAKSAGADLFGEEDLVESINKGNMEFDLLIATPDMMPKVAKLGRVLGPRGLMPNPKAGTVTNDIGNAIKEFKAGKLEFRADKAGIVHVRFGKASFTKEALFENLKTLQESIDKNKPSGAKGKYWKSFYVTSTMGPSVQVDINAVQDYQAEG.

This sequence belongs to the universal ribosomal protein uL1 family. In terms of assembly, part of the 50S ribosomal subunit.

In terms of biological role, binds directly to 23S rRNA. The L1 stalk is quite mobile in the ribosome, and is involved in E site tRNA release. Protein L1 is also a translational repressor protein, it controls the translation of the L11 operon by binding to its mRNA. The protein is Large ribosomal subunit protein uL1 of Prochlorococcus marinus (strain MIT 9215).